The sequence spans 322 residues: tRNA U34 carboxymethyltransferase (322 aa).

Residues Lys92, Trp106, Lys111, Gly131, 153 to 155 (DPT), 181 to 182 (VE), Met196, Tyr200, and Arg315 contribute to the carboxy-S-adenosyl-L-methionine site.

This sequence belongs to the class I-like SAM-binding methyltransferase superfamily. CmoB family. Homotetramer.

It carries out the reaction carboxy-S-adenosyl-L-methionine + 5-hydroxyuridine(34) in tRNA = 5-carboxymethoxyuridine(34) in tRNA + S-adenosyl-L-homocysteine + H(+). In terms of biological role, catalyzes carboxymethyl transfer from carboxy-S-adenosyl-L-methionine (Cx-SAM) to 5-hydroxyuridine (ho5U) to form 5-carboxymethoxyuridine (cmo5U) at position 34 in tRNAs. In Colwellia psychrerythraea (strain 34H / ATCC BAA-681) (Vibrio psychroerythus), this protein is tRNA U34 carboxymethyltransferase.